Consider the following 295-residue polypeptide: Protease HtpX (295 aa).

2 helical membrane passes run 4-24 (ILLF…TLSL) and 42-62 (QLLV…LFIS). Histidine 147 contributes to the Zn(2+) binding site. Glutamate 148 is an active-site residue. Histidine 151 lines the Zn(2+) pocket. 2 consecutive transmembrane segments (helical) span residues 158–178 (VTLA…ARII) and 199–219 (ITTI…VMWF). Glutamate 224 serves as a coordination point for Zn(2+).

The protein belongs to the peptidase M48B family. It depends on Zn(2+) as a cofactor.

Its subcellular location is the cell inner membrane. This Pseudomonas syringae pv. syringae (strain B728a) protein is Protease HtpX.